Here is a 60-residue protein sequence, read N- to C-terminus: Protein translocase subunit SecE (60 aa).

The chain crosses the membrane as a helical span at residues 31–51; the sequence is IIVVSTVIFFLVFFYALDIGI.

This sequence belongs to the SecE/SEC61-gamma family. In terms of assembly, component of the Sec protein translocase complex. Heterotrimer consisting of SecY, SecE and SecG subunits. The heterotrimers can form oligomers, although 1 heterotrimer is thought to be able to translocate proteins. Interacts with the ribosome. Interacts with SecDF, and other proteins may be involved. Interacts with SecA.

The protein resides in the cell membrane. Essential subunit of the Sec protein translocation channel SecYEG. Clamps together the 2 halves of SecY. May contact the channel plug during translocation. In Staphylococcus epidermidis (strain ATCC 35984 / DSM 28319 / BCRC 17069 / CCUG 31568 / BM 3577 / RP62A), this protein is Protein translocase subunit SecE.